The chain runs to 147 residues: NADPH-dependent 7-cyano-7-deazaguanine reductase (147 aa).

The segment at M1–Y23 is disordered. The active-site Thioimide intermediate is the C46. The active-site Proton donor is the D53. Residues V68 to S70 and H87 to E88 contribute to the substrate site.

Belongs to the GTP cyclohydrolase I family. QueF type 1 subfamily.

The protein resides in the cytoplasm. It carries out the reaction 7-aminomethyl-7-carbaguanine + 2 NADP(+) = 7-cyano-7-deazaguanine + 2 NADPH + 3 H(+). It functions in the pathway tRNA modification; tRNA-queuosine biosynthesis. Functionally, catalyzes the NADPH-dependent reduction of 7-cyano-7-deazaguanine (preQ0) to 7-aminomethyl-7-deazaguanine (preQ1). This Zymomonas mobilis subsp. mobilis (strain ATCC 31821 / ZM4 / CP4) protein is NADPH-dependent 7-cyano-7-deazaguanine reductase.